A 518-amino-acid polypeptide reads, in one-letter code: Protein nucleotidyltransferase YdiU (518 aa).

Residues Gly-100, Gly-102, Arg-103, Lys-123, Asp-135, Gly-136, Arg-193, and Arg-200 each contribute to the ATP site. Asp-270 functions as the Proton acceptor in the catalytic mechanism. Residues Asn-271 and Asp-280 each coordinate Mg(2+). Asp-280 is a binding site for ATP.

It belongs to the SELO family. The cofactor is Mg(2+). Mn(2+) is required as a cofactor.

It carries out the reaction L-seryl-[protein] + ATP = 3-O-(5'-adenylyl)-L-seryl-[protein] + diphosphate. It catalyses the reaction L-threonyl-[protein] + ATP = 3-O-(5'-adenylyl)-L-threonyl-[protein] + diphosphate. The catalysed reaction is L-tyrosyl-[protein] + ATP = O-(5'-adenylyl)-L-tyrosyl-[protein] + diphosphate. The enzyme catalyses L-histidyl-[protein] + UTP = N(tele)-(5'-uridylyl)-L-histidyl-[protein] + diphosphate. It carries out the reaction L-seryl-[protein] + UTP = O-(5'-uridylyl)-L-seryl-[protein] + diphosphate. It catalyses the reaction L-tyrosyl-[protein] + UTP = O-(5'-uridylyl)-L-tyrosyl-[protein] + diphosphate. Its function is as follows. Nucleotidyltransferase involved in the post-translational modification of proteins. It can catalyze the addition of adenosine monophosphate (AMP) or uridine monophosphate (UMP) to a protein, resulting in modifications known as AMPylation and UMPylation. The chain is Protein nucleotidyltransferase YdiU from Xanthomonas oryzae pv. oryzae (strain PXO99A).